We begin with the raw amino-acid sequence, 424 residues long: Zinc metalloproteinase-disintegrin-like brevilysin H2b (424 aa).

At Gln1 the chain carries Pyrrolidone carboxylic acid. Residues Arg9–Pro207 enclose the Peptidase M12B domain. Asn69 carries an N-linked (GlcNAc...) asparagine glycan. Asp96 serves as a coordination point for Ca(2+). 3 disulfide bridges follow: Cys120–Cys202, Cys164–Cys186, and Cys166–Cys169. His145 contributes to the Zn(2+) binding site. Glu146 is an active-site residue. Zn(2+)-binding residues include His149 and His155. An N-linked (GlcNAc...) asparagine glycan is attached at Asn185. Ca(2+) contacts are provided by Cys202, Asn205, Val217, Asn220, Leu222, Glu224, Glu227, and Asp230. Residues Pro215 to Asn301 form the Disintegrin domain. 14 cysteine pairs are disulfide-bonded: Cys218/Cys247, Cys229/Cys242, Cys231/Cys237, Cys241/Cys264, Cys255/Cys261, Cys260/Cys286, Cys273/Cys293, Cys280/Cys312, Cys305/Cys317, Cys324/Cys374, Cys339/Cys385, Cys352/Cys362, Cys369/Cys411, and Cys405/Cys417. A D/ECD-tripeptide motif is present at residues Asp279–Asp281. Ca(2+) contacts are provided by Asp281, Glu284, and Asp296.

It belongs to the venom metalloproteinase (M12B) family. P-III subfamily. P-IIIa sub-subfamily. In terms of assembly, monomer. Zn(2+) is required as a cofactor. Glycosylated. As to expression, expressed by the venom gland.

It is found in the secreted. Its proteolytic activity is inhibited by EDTA, TPEN, 1,10-phenanthroline, and some thiol compounds, but is enhanced by alkaline earth metal ions (Mg2+, Ca2+, Sr2+, and Ba2+). Its activity is not modulated by urea (4 M). Non-hemorrhagic metalloproteinase that degrades fibrinogen. The alpha chain (FGA) is rapidly degraded, the beta chain (FGB) is degraded very slowly, while the gamma chain is left intact. Shows a prefential cleavage at X-Leu bonds. Cleaves insulin B chain at '29-His-|-Leu-30', '33-Ser-|-His-34', '38-Ala-|-Leu-39' and '40-Tyr-|-Leu-41' bonds. The sequence is that of Zinc metalloproteinase-disintegrin-like brevilysin H2b from Gloydius brevicauda (Korean slamosa snake).